Reading from the N-terminus, the 135-residue chain is Large ribosomal subunit protein uL16c (135 aa).

It belongs to the universal ribosomal protein uL16 family. Part of the 50S ribosomal subunit.

The protein localises to the plastid. It localises to the chloroplast. The sequence is that of Large ribosomal subunit protein uL16c from Oenothera argillicola (Appalachian evening primrose).